Reading from the N-terminus, the 279-residue chain is 4-diphosphocytidyl-2-C-methyl-D-erythritol kinase (279 aa).

Residue Lys-9 is part of the active site. 92–102 (PLAAGLGGGSS) serves as a coordination point for ATP. The active site involves Asp-134.

The protein belongs to the GHMP kinase family. IspE subfamily.

The enzyme catalyses 4-CDP-2-C-methyl-D-erythritol + ATP = 4-CDP-2-C-methyl-D-erythritol 2-phosphate + ADP + H(+). The protein operates within isoprenoid biosynthesis; isopentenyl diphosphate biosynthesis via DXP pathway; isopentenyl diphosphate from 1-deoxy-D-xylulose 5-phosphate: step 3/6. Its function is as follows. Catalyzes the phosphorylation of the position 2 hydroxy group of 4-diphosphocytidyl-2C-methyl-D-erythritol. In Syntrophus aciditrophicus (strain SB), this protein is 4-diphosphocytidyl-2-C-methyl-D-erythritol kinase.